We begin with the raw amino-acid sequence, 256 residues long: MSKDLISTDEYIKIKKKRKRIKKIVVLFIFLISILVTLCLKIPYFNIESIEIKGNVNIPKEIIKDSSTIKTGNNIFYTNKKDAIENISLNPYIEEVKITKKLPNKLEIYVKEREALFYNKVDKDFFIISKNGCLLEKRKEIKNMKLINLQGFEFNESKIGSALKAKDERGVKILNDFGVLLKNNASDVIFTQLDLRNLLDIRIYSNGICVKIGTSDQIEKKLNTAINILKRDELKKAKKGYVDVSYEGNPVFYIEK.

Over 1–23 (MSKDLISTDEYIKIKKKRKRIKK) the chain is Cytoplasmic. A helical transmembrane segment spans residues 24-44 (IVVLFIFLISILVTLCLKIPY). One can recognise a POTRA domain in the interval 45-113 (FNIESIEIKG…NKLEIYVKER (69 aa)). At 45-256 (FNIESIEIKG…EGNPVFYIEK (212 aa)) the chain is on the extracellular side.

This sequence belongs to the FtsQ/DivIB family. DivIB subfamily.

The protein localises to the cell membrane. In terms of biological role, cell division protein that may be involved in stabilizing or promoting the assembly of the division complex. This is Cell division protein DivIB from Clostridium botulinum (strain Loch Maree / Type A3).